The following is a 397-amino-acid chain: tRNA (guanine-N(7)-)-methyltransferase non-catalytic subunit wuho (397 aa).

4 WD repeats span residues 75–115, 163–202, 206–244, and 303–343; these read KVEV…AQLL, GHLS…DIHS, GHKE…ELLL, and AGTW…RASG.

This sequence belongs to the WD repeat TRM82 family. Forms a heterodimer with the catalytic subunit Mettl1. Interacts with mei-P26 and weakly interacts with bgcn; required for the function or formation of the mei-P26-bgcn-bam-sxl complex. Interacts with nanos; may be involved in mei-P26-dependent derepression of the BMP signaling pathway. Interacts with Myc; the interaction may be mediated by mei-P26 and may be involved in the regulation of ribosome biogenesis. In terms of tissue distribution, in testis, it is present at high level in hub cells, a niche for germline stem cells of testis. Ubiquitously expressed in all testicular cells throughout spermatogenesis. Ubiquitously expressed in all germline and somatic cells of the ovary.

It is found in the nucleus. It localises to the cytoplasm. It participates in tRNA modification; N(7)-methylguanine-tRNA biosynthesis. Required for the Mettl1-dependent formation of N(7)-methylguanine at position 46 (m7G46) in tRNA. In the Mettl1-wuho methyltransferase complex, it is required to stabilize and induce conformational changes of the catalytic subunit. Required for binding of nanos mRNA and repression of translation by the mei-P26-bgcn-bam-sxl complex. May cooperate with mei-P26 and nanos to derepress the BMP signaling pathway. May cooperate with mei-P26 to suppress expression of a subset of microRNAs. May cooperate with mei-P26 to regulate bam expression levels in germline cells during gametogenesis. Required to promote mitosis to meiosis transition during gametogenesis. May regulate germline cell division in part by regulating ribosome biogenesis. This is tRNA (guanine-N(7)-)-methyltransferase non-catalytic subunit wuho from Drosophila persimilis (Fruit fly).